Consider the following 406-residue polypeptide: Diaminopimelate decarboxylase (406 aa).

Lys-52 carries the post-translational modification N6-(pyridoxal phosphate)lysine. Pyridoxal 5'-phosphate contacts are provided by residues Gly-231 and 265-268; that span reads EPGR. Substrate-binding residues include Arg-268, Arg-304, and Tyr-308. Residue Cys-334 is the Proton donor of the active site. Positions 335 and 362 each coordinate substrate. Tyr-362 provides a ligand contact to pyridoxal 5'-phosphate.

This sequence belongs to the Orn/Lys/Arg decarboxylase class-II family. LysA subfamily. In terms of assembly, homodimer. The cofactor is pyridoxal 5'-phosphate.

The enzyme catalyses meso-2,6-diaminopimelate + H(+) = L-lysine + CO2. It participates in amino-acid biosynthesis; L-lysine biosynthesis via DAP pathway; L-lysine from DL-2,6-diaminopimelate: step 1/1. Specifically catalyzes the decarboxylation of meso-diaminopimelate (meso-DAP) to L-lysine. The polypeptide is Diaminopimelate decarboxylase (Neisseria meningitidis serogroup A / serotype 4A (strain DSM 15465 / Z2491)).